A 264-amino-acid polypeptide reads, in one-letter code: Apolipoprotein A-I (264 aa).

The N-terminal stretch at 1–18 (MKAVVLAVALVFLTGSQA) is a signal peptide. 2 consecutive repeat copies span residues 67-88 (LNLL…ERLG) and 89-110 (PLTR…QEMN). The interval 67-264 (LNLLENWDTL…DKASETLTAQ (198 aa)) is 10 X approximate tandem repeats. Methionine sulfoxide is present on M109. One copy of the 3; half-length repeat lies at 111-121 (KDLEEVKQKVQ). 3 consecutive repeat copies span residues 122-143 (PYLD…QKVA), 144-165 (PLGA…GRLS), and 166-187 (PVAE…TQLA). A 7; truncated repeat occupies 188-207 (PHSEQMRESLAQRLAELKSN). M193 is modified (methionine sulfoxide). Repeat unit 8 spans residues 208–229 (PTLNEYHTRAKTHLKTLGEKAR). One copy of the 9; half-length repeat lies at 230–240 (PALEDLRHSLM). A methionine sulfoxide mark is found at M240 and M242. Repeat 10 spans residues 241–264 (PMLETLKTQVQSVIDKASETLTAQ).

The protein belongs to the apolipoprotein A1/A4/E family. Homodimer. Interacts with APOA1BP and CLU. Component of a sperm activating protein complex (SPAP), consisting of APOA1, an immunoglobulin heavy chain, an immunoglobulin light chain and albumin. Interacts with NDRG1. Interacts with SCGB3A2. Interacts with NAXE and YJEFN3. In terms of processing, glycosylated. Palmitoylated. Post-translationally, may be acylated. In terms of processing, phosphorylation sites are present in the extracellular medium. Major protein of plasma HDL, also found in chylomicrons.

Its subcellular location is the secreted. Participates in the reverse transport of cholesterol from tissues to the liver for excretion by promoting cholesterol efflux from tissues and by acting as a cofactor for the lecithin cholesterol acyltransferase (LCAT). As part of the SPAP complex, activates spermatozoa motility. The protein is Apolipoprotein A-I (Apoa1) of Mus musculus (Mouse).